We begin with the raw amino-acid sequence, 431 residues long: Adenylosuccinate synthetase (431 aa).

GTP contacts are provided by residues 13-19 and 41-43; these read GDEGKGK and GHT. Aspartate 14 serves as the catalytic Proton acceptor. Mg(2+)-binding residues include aspartate 14 and glycine 41. IMP contacts are provided by residues 14–17, 39–42, threonine 130, arginine 144, glutamine 225, threonine 240, and arginine 304; these read DEGK and NAGH. Histidine 42 acts as the Proton donor in catalysis. 300–306 lines the substrate pocket; the sequence is AVTGRPR. Residues arginine 306, 332-334, and 415-417 contribute to the GTP site; these read KLD and STG.

The protein belongs to the adenylosuccinate synthetase family. In terms of assembly, homodimer. Requires Mg(2+) as cofactor.

It localises to the cytoplasm. It catalyses the reaction IMP + L-aspartate + GTP = N(6)-(1,2-dicarboxyethyl)-AMP + GDP + phosphate + 2 H(+). It functions in the pathway purine metabolism; AMP biosynthesis via de novo pathway; AMP from IMP: step 1/2. Functionally, plays an important role in the de novo pathway of purine nucleotide biosynthesis. Catalyzes the first committed step in the biosynthesis of AMP from IMP. This is Adenylosuccinate synthetase from Legionella pneumophila (strain Paris).